The sequence spans 441 residues: Transcriptional regulatory protein ZraR (441 aa).

Residues 7 to 121 (DILVVDDDIS…NLQATLEKAL (115 aa)) form the Response regulatory domain. D56 is subject to 4-aspartylphosphate. One can recognise a Sigma-54 factor interaction domain in the interval 141–370 (MVGKSPAMQH…LENAVERAVV (230 aa)). The ATP site is built by G172, T173, R329, and R359. The segment at residues 421-440 (KTEAARQLGITRKTLLAKLS) is a DNA-binding region (H-T-H motif).

Monomer. Post-translationally, phosphorylated by ZraS.

Its subcellular location is the cytoplasm. Activity of the ZraS/ZraR two-component system is repressed by the zinc-bound form of ZraP, which probably interacts with the periplasmic region of ZraS. Part of the Zra signaling pathway, an envelope stress response (ESR) system composed of the periplasmic accessory protein ZraP, the histidine kinase ZraS and the transcriptional regulator ZraR. The ZraPSR system contributes to antibiotic resistance and is important for membrane integrity in the presence of membrane-targeting biocides. ZraR is a member of the two-component regulatory system ZraS/ZraR. When activated by ZraS, acts in conjunction with sigma-54 to regulate the expression of zraP in the presence of high Zn(2+) or Pb(2+) concentrations. Also positively autoregulates the expression of the zraSR operon. Binds to a region within the zraP-zraSR intergenic region that is characterized by two inverted repeats separated by a 14 bp spacer. In addition, controls a regulon of genes of diverse functions that may be critical to maintain envelope integrity and cell survival under stressful conditions. The system has no direct role in zinc or copper resistance. This Escherichia coli (strain K12) protein is Transcriptional regulatory protein ZraR.